The primary structure comprises 153 residues: MTIWEISEKADYIAQRHRRLQDQWHIYCNSLVQGITLSKARLHHAMSCAPDKELCFVLFEHFRIYVTLADGFNSHTIEYYVETKDGEDKQRIAQAQLSIDGMIDGKVNIRDREQVLEHYLEKIAGVYDSLYTAIENNVPVNLSQLVKGQSPAA.

Its function is as follows. Regulatory protein for the formate hydrogenlyase system. Could act by directly interacting with FhlA or by preventing the binding of FhlA to the upstream activatory sequence. This is Formate hydrogenlyase regulatory protein HycA (hycA) from Escherichia coli O157:H7.